Here is a 421-residue protein sequence, read N- to C-terminus: NAD-specific glutamate dehydrogenase (421 aa).

Positions 70 and 94 each coordinate substrate. K106 (proton donor) is an active-site residue. 2 residues coordinate NAD(+): T191 and N222. Substrate is bound at residue S355.

This sequence belongs to the Glu/Leu/Phe/Val dehydrogenases family. Homohexamer.

It catalyses the reaction L-glutamate + NAD(+) + H2O = 2-oxoglutarate + NH4(+) + NADH + H(+). The protein operates within amino-acid degradation; L-glutamate degradation via hydroxyglutarate pathway; crotonoyl-CoA from L-glutamate: step 1/5. The polypeptide is NAD-specific glutamate dehydrogenase (Peptoniphilus asaccharolyticus (Peptostreptococcus asaccharolyticus)).